The sequence spans 486 residues: Cardiolipin synthase A (486 aa).

The next 2 membrane-spanning stretches (helical) occupy residues T3–V23 and M38–F58. 2 consecutive PLD phosphodiesterase domains span residues M219–R246 and E399–S426. Catalysis depends on residues H224, K226, D231, H404, K406, and D411.

This sequence belongs to the phospholipase D family. Cardiolipin synthase subfamily. ClsA sub-subfamily.

It is found in the cell inner membrane. The catalysed reaction is 2 a 1,2-diacyl-sn-glycero-3-phospho-(1'-sn-glycerol) = a cardiolipin + glycerol. Catalyzes the reversible phosphatidyl group transfer from one phosphatidylglycerol molecule to another to form cardiolipin (CL) (diphosphatidylglycerol) and glycerol. The polypeptide is Cardiolipin synthase A (Klebsiella pneumoniae (strain 342)).